The sequence spans 233 residues: Small ribosomal subunit protein uS3 (233 aa).

In terms of domain architecture, KH type-2 spans 39-107; the sequence is VRQFLNKELE…PAQINIAEVR (69 aa).

The protein belongs to the universal ribosomal protein uS3 family. Part of the 30S ribosomal subunit. Forms a tight complex with proteins S10 and S14.

Its function is as follows. Binds the lower part of the 30S subunit head. Binds mRNA in the 70S ribosome, positioning it for translation. This Edwardsiella ictaluri (strain 93-146) protein is Small ribosomal subunit protein uS3.